The following is a 292-amino-acid chain: 4-hydroxy-tetrahydrodipicolinate synthase (292 aa).

Thr-44 lines the pyruvate pocket. The active-site Proton donor/acceptor is the Tyr-132. Lys-161 functions as the Schiff-base intermediate with substrate in the catalytic mechanism. Ile-203 lines the pyruvate pocket.

It belongs to the DapA family. Homotetramer; dimer of dimers.

Its subcellular location is the cytoplasm. The enzyme catalyses L-aspartate 4-semialdehyde + pyruvate = (2S,4S)-4-hydroxy-2,3,4,5-tetrahydrodipicolinate + H2O + H(+). The protein operates within amino-acid biosynthesis; L-lysine biosynthesis via DAP pathway; (S)-tetrahydrodipicolinate from L-aspartate: step 3/4. Catalyzes the condensation of (S)-aspartate-beta-semialdehyde [(S)-ASA] and pyruvate to 4-hydroxy-tetrahydrodipicolinate (HTPA). In Fervidobacterium nodosum (strain ATCC 35602 / DSM 5306 / Rt17-B1), this protein is 4-hydroxy-tetrahydrodipicolinate synthase.